Here is a 381-residue protein sequence, read N- to C-terminus: Protein YkfC (381 aa).

The Reverse transcriptase domain maps to 72–337 (LRDELLSGHY…DGFIFLGHRL (266 aa)). Mg(2+) is bound by residues Asp166, Asp284, and Asp285.

It belongs to the bacterial reverse transcriptase family.

The polypeptide is Protein YkfC (ykfC) (Escherichia coli (strain K12)).